The chain runs to 274 residues: ATP synthase subunit delta (274 aa).

The protein belongs to the ATPase delta chain family. In terms of assembly, F-type ATPases have 2 components, F(1) - the catalytic core - and F(0) - the membrane proton channel. F(1) has five subunits: alpha(3), beta(3), gamma(1), delta(1), epsilon(1). F(0) has three main subunits: a(1), b(2) and c(10-14). The alpha and beta chains form an alternating ring which encloses part of the gamma chain. F(1) is attached to F(0) by a central stalk formed by the gamma and epsilon chains, while a peripheral stalk is formed by the delta and b chains.

It localises to the cell membrane. F(1)F(0) ATP synthase produces ATP from ADP in the presence of a proton or sodium gradient. F-type ATPases consist of two structural domains, F(1) containing the extramembraneous catalytic core and F(0) containing the membrane proton channel, linked together by a central stalk and a peripheral stalk. During catalysis, ATP synthesis in the catalytic domain of F(1) is coupled via a rotary mechanism of the central stalk subunits to proton translocation. Functionally, this protein is part of the stalk that links CF(0) to CF(1). It either transmits conformational changes from CF(0) to CF(1) or is implicated in proton conduction. The polypeptide is ATP synthase subunit delta (Salinispora arenicola (strain CNS-205)).